A 517-amino-acid polypeptide reads, in one-letter code: ATP synthase subunit alpha 1 (517 aa).

Position 174–181 (174–181 (GDRQTGKT)) interacts with ATP.

This sequence belongs to the ATPase alpha/beta chains family. As to quaternary structure, F-type ATPases have 2 components, CF(1) - the catalytic core - and CF(0) - the membrane proton channel. CF(1) has five subunits: alpha(3), beta(3), gamma(1), delta(1), epsilon(1). CF(0) has three main subunits: a(1), b(2) and c(9-12). The alpha and beta chains form an alternating ring which encloses part of the gamma chain. CF(1) is attached to CF(0) by a central stalk formed by the gamma and epsilon chains, while a peripheral stalk is formed by the delta and b chains.

The protein localises to the cell inner membrane. It catalyses the reaction ATP + H2O + 4 H(+)(in) = ADP + phosphate + 5 H(+)(out). Its function is as follows. Produces ATP from ADP in the presence of a proton gradient across the membrane. The alpha chain is a regulatory subunit. In Albidiferax ferrireducens (strain ATCC BAA-621 / DSM 15236 / T118) (Rhodoferax ferrireducens), this protein is ATP synthase subunit alpha 1.